Here is a 690-residue protein sequence, read N- to C-terminus: MPRQHAIEDYRNFGIMAHIDAGKTTTTERILYYTGKSHKIGEVHEGAATMDWMEQEQERGITITSAATTAFWAGKRLNIIDTPGHVDFTIEVERSLRVLDGAVCVLDSNQGVEPQTETVWRQGDKYKVPRIVFANKMDKTGADFFKCLADIVDRLGAKPIAIQLPIGAENNFKGLVDLVKMKGIVWNDESLGAKFDYVDIPEDLVEQAKEYREKMVEAAVELDDDALAAFLDGNEPDEATLKRLIRKAVLTGAFYPVLCGSAFKNKGVQPLLDAVVDYLPSPIDVPAIKGTDDRGNEVVRKADDKEPLALLAFKIMDDPFVGTITFCRIYSGVLQSGTGVVNSTREKKERIGRMLLMHANNREDIKEAYAGDIVALAGLKEARTGDTLCDPDKQVILEKMEFPEPVIEIAIEPKSKADQEKLGVALAKLAAEDPSFRVSTDQESGQTILKGMGELHLDIKVDILKRTYKVDANIGAPQVAFRERVTKKAEVKYTHKKQTGGTGQFAEVSIVVEPNEPGKGYEFESKIVGGAVPKEYIPGVEKGLNSVMSSGVVAGFPVVDVKVQLVDGKYHDVDSSALAFEIASRAAFREALQKGKSVLLEPIMKVEVVTPEDYTGSVIGDLNSRRGQIQGQDMRGNANVINAMVPLMNMFGYVNNLRSMSQGRATFTMQFDHYAEAPANVSAEVQKKFA.

The tr-type G domain maps to Glu-8–Ile-283. Residues Ala-17–Thr-24, Asp-81–His-85, and Asn-135–Asp-138 each bind GTP.

This sequence belongs to the TRAFAC class translation factor GTPase superfamily. Classic translation factor GTPase family. EF-G/EF-2 subfamily.

Its subcellular location is the cytoplasm. Functionally, catalyzes the GTP-dependent ribosomal translocation step during translation elongation. During this step, the ribosome changes from the pre-translocational (PRE) to the post-translocational (POST) state as the newly formed A-site-bound peptidyl-tRNA and P-site-bound deacylated tRNA move to the P and E sites, respectively. Catalyzes the coordinated movement of the two tRNA molecules, the mRNA and conformational changes in the ribosome. In Bradyrhizobium diazoefficiens (strain JCM 10833 / BCRC 13528 / IAM 13628 / NBRC 14792 / USDA 110), this protein is Elongation factor G.